The following is a 213-amino-acid chain: Maleylacetoacetate isomerase (213 aa).

The GST N-terminal domain maps to 3–84 (NETVLYDYWR…YLAETRDGTG (82 aa)). One can recognise a GST C-terminal domain in the interval 89–213 (HPIDRQRVRA…QRAHPDRAKP (125 aa)).

This sequence belongs to the GST superfamily. Zeta family.

It carries out the reaction 4-maleylacetoacetate = 4-fumarylacetoacetate. The protein operates within amino-acid degradation; L-phenylalanine degradation; acetoacetate and fumarate from L-phenylalanine: step 5/6. The protein is Maleylacetoacetate isomerase (maiA) of Rhizobium meliloti (strain 1021) (Ensifer meliloti).